The primary structure comprises 226 residues: Cytidylate kinase (226 aa).

Residue 10 to 18 (GPASSGKST) participates in ATP binding.

It belongs to the cytidylate kinase family. Type 1 subfamily.

Its subcellular location is the cytoplasm. The catalysed reaction is CMP + ATP = CDP + ADP. The enzyme catalyses dCMP + ATP = dCDP + ADP. This is Cytidylate kinase from Streptococcus equi subsp. equi (strain 4047).